Here is a 397-residue protein sequence, read N- to C-terminus: Phosphoglycerate kinase (397 aa).

Residues 23-25 (DFN), Arg-38, 61-64 (HMGK), Arg-122, and Arg-155 each bind substrate. Residues Lys-206, Gly-296, Glu-327, and 353-356 (GGDS) contribute to the ATP site.

This sequence belongs to the phosphoglycerate kinase family. Monomer.

The protein resides in the cytoplasm. The catalysed reaction is (2R)-3-phosphoglycerate + ATP = (2R)-3-phospho-glyceroyl phosphate + ADP. It functions in the pathway carbohydrate degradation; glycolysis; pyruvate from D-glyceraldehyde 3-phosphate: step 2/5. The sequence is that of Phosphoglycerate kinase from Clostridium perfringens (strain SM101 / Type A).